A 237-amino-acid polypeptide reads, in one-letter code: 2-C-methyl-D-erythritol 4-phosphate cytidylyltransferase (237 aa).

It belongs to the IspD/TarI cytidylyltransferase family. IspD subfamily.

It carries out the reaction 2-C-methyl-D-erythritol 4-phosphate + CTP + H(+) = 4-CDP-2-C-methyl-D-erythritol + diphosphate. It functions in the pathway isoprenoid biosynthesis; isopentenyl diphosphate biosynthesis via DXP pathway; isopentenyl diphosphate from 1-deoxy-D-xylulose 5-phosphate: step 2/6. In terms of biological role, catalyzes the formation of 4-diphosphocytidyl-2-C-methyl-D-erythritol from CTP and 2-C-methyl-D-erythritol 4-phosphate (MEP). In Clostridioides difficile (strain 630) (Peptoclostridium difficile), this protein is 2-C-methyl-D-erythritol 4-phosphate cytidylyltransferase.